A 393-amino-acid chain; its full sequence is Putative odorant receptor 69a, isoform A (393 aa).

Topologically, residues 1 to 39 are cytoplasmic; the sequence is MQLHDHMKYIDLGCKMACIPRYQWKGRPTERQFYASEQR. The helical transmembrane segment at 40 to 60 threads the bilayer; the sequence is IVFLLGTICQIFQITGVLIYW. The Extracellular segment spans residues 61-76; the sequence is YCNGRLATETGTFVAQ. A helical transmembrane segment spans residues 77-97; the sequence is LSEMCSSFCLTFVGFCNVYAI. Topologically, residues 98 to 139 are cytoplasmic; sequence STNRNQIETLLEELHQIYPRYRKNHYRCQHYFDMAMTIMRIE. The chain crosses the membrane as a helical span at residues 140–160; it reads FLFYMILYVYYNSAPLWVLLW. Residues 161-189 are Extracellular-facing; the sequence is EHLHEEYDLSFKTQTNTWFPWKVHGSALG. The chain crosses the membrane as a helical span at residues 190-210; that stretch reads FGMAVLSITVGSFVGVGFSIV. Over 211–269 the chain is Cytoplasmic; sequence TQNLICLLTFQLKLHYDGISSQLVSLDCRRPGAHKELSILIAHHSRILQLGDQVNDIMN. The chain crosses the membrane as a helical span at residues 270 to 290; sequence FVFGSSLVGATIAICMSSVSI. The Extracellular segment spans residues 291–304; that stretch reads MLLDLASAFKYASG. A helical transmembrane segment spans residues 305 to 325; it reads LVAFVLYNFVICYMGTEVTLA. Over 326 to 365 the chain is Cytoplasmic; sequence SGKVLPAAFYNNWYEGDLVYRRMLLILMMRATKPYMWKTY. The helical transmembrane segment at 366–386 threads the bilayer; that stretch reads KLAPVSITTYMATLKFSYQMF. Residues 387–393 lie on the Extracellular side of the membrane; that stretch reads TCVRSLK.

The protein belongs to the insect chemoreceptor superfamily. Heteromeric odorant receptor channel (TC 1.A.69) family. Or49a subfamily. In terms of assembly, interacts with Orco. Complexes exist early in the endomembrane system in olfactory sensory neurons (OSNs), coupling these complexes to the conserved ciliary trafficking pathway. Expressed in olfactory sensory neurons in the antenna.

It is found in the cell membrane. Odorant receptor which mediates acceptance or avoidance behavior, depending on its substrates. The odorant receptor repertoire encodes a large collection of odor stimuli that vary widely in identity, intensity, and duration. May form a complex with Orco to form odorant-sensing units, providing sensitive and prolonged odorant signaling and calcium permeability. This chain is Putative odorant receptor 69a, isoform A (Or69a), found in Drosophila melanogaster (Fruit fly).